The chain runs to 426 residues: MNNLKNLRGTVDLFPDQLIKWQNVEKILLEQLSRASIKEIRTPILEMTELFIRGIGEGTDVVSKEMYTFLDRGERSCTLRPEGTASVARALIQNGISSNPIQKLWYMGPMFRYERPQAGRQRQFHQLGVEFIGHDSVRSDVEIIALAWDILRKLGIKELNLEINTLGDTNDRSNFQKSFLKWLETNKDSLDLDSQNRISKNPLRILDSKNIQTKKVLENAPRLFNFLSEKSHNRYLDLKRQLEVLKIPYVENFNLVRGLDYYTHTAFEITSGALGSQATVCGGGRYDDLIKQMGGPNTPAIGFAIGLERLILLAGKELEIPRNTDIYIINKGLVAESLAMDLSRKLRNYDLLVELDLSGASFSKQFKKANKLKSKSIIVIGEDEAVNGEFIIRLFDQSGNGNEEEVISFENDIKLENWINNNLLVK.

This sequence belongs to the class-II aminoacyl-tRNA synthetase family. Homodimer.

The protein localises to the cytoplasm. The enzyme catalyses tRNA(His) + L-histidine + ATP = L-histidyl-tRNA(His) + AMP + diphosphate + H(+). The polypeptide is Histidine--tRNA ligase (Prochlorococcus marinus (strain AS9601)).